Here is a 293-residue protein sequence, read N- to C-terminus: MSLFDWFADRRKGQSTGKITQEPEEGDGLWSKCPECGLVVYVKDLKGNASVCAGCGHHHRIDSHERIALIADPGSFEALNEALEPTDPLTFKDRRAYADRLRESQAATGLRDGVVTGLCRVDGLAMALAVMDFRFMGGSMGSVVGEKITRLVEEATARRLPLLIVCASGGARMQEGMLSLMQMAKISGALERHREAELLYMPLLTHPTTGGVTASFAMLGDLILAEPKALIGFAGRRVIEQTLREKLPDNFQTAEYLQDHGFVDTIVPRTQLRSSLASLLRLHGCRPMEITSA.

The 265-residue stretch at 29–293 (LWSKCPECGL…GCRPMEITSA (265 aa)) folds into the CoA carboxyltransferase N-terminal domain. Positions 33, 36, 52, and 55 each coordinate Zn(2+). The C4-type zinc-finger motif lies at 33–55 (CPECGLVVYVKDLKGNASVCAGC).

Belongs to the AccD/PCCB family. In terms of assembly, acetyl-CoA carboxylase is a heterohexamer composed of biotin carboxyl carrier protein (AccB), biotin carboxylase (AccC) and two subunits each of ACCase subunit alpha (AccA) and ACCase subunit beta (AccD). The cofactor is Zn(2+).

Its subcellular location is the cytoplasm. It catalyses the reaction N(6)-carboxybiotinyl-L-lysyl-[protein] + acetyl-CoA = N(6)-biotinyl-L-lysyl-[protein] + malonyl-CoA. Its pathway is lipid metabolism; malonyl-CoA biosynthesis; malonyl-CoA from acetyl-CoA: step 1/1. In terms of biological role, component of the acetyl coenzyme A carboxylase (ACC) complex. Biotin carboxylase (BC) catalyzes the carboxylation of biotin on its carrier protein (BCCP) and then the CO(2) group is transferred by the transcarboxylase to acetyl-CoA to form malonyl-CoA. This Parasynechococcus marenigrum (strain WH8102) protein is Acetyl-coenzyme A carboxylase carboxyl transferase subunit beta.